The primary structure comprises 398 residues: Phosphoglycerate kinase (398 aa).

Residues 22 to 24, Arg38, 61 to 64, Arg120, and Arg153 each bind substrate; these read DFN and HLGR. ATP is bound by residues Lys204, Glu326, and 352–355; that span reads GGDT.

It belongs to the phosphoglycerate kinase family. As to quaternary structure, monomer.

It localises to the cytoplasm. The enzyme catalyses (2R)-3-phosphoglycerate + ATP = (2R)-3-phospho-glyceroyl phosphate + ADP. It functions in the pathway carbohydrate degradation; glycolysis; pyruvate from D-glyceraldehyde 3-phosphate: step 2/5. The sequence is that of Phosphoglycerate kinase from Geobacter metallireducens (strain ATCC 53774 / DSM 7210 / GS-15).